The sequence spans 529 residues: Peptide chain release factor 3 (529 aa).

The tr-type G domain occupies 11-280; the sequence is AKRRTFAIIS…GLVEWAPAPM (270 aa). Residues 20-27, 88-92, and 142-145 each bind GTP; these read SHPDAGKT, DTPGH, and NKLD.

The protein belongs to the TRAFAC class translation factor GTPase superfamily. Classic translation factor GTPase family. PrfC subfamily.

It localises to the cytoplasm. In terms of biological role, increases the formation of ribosomal termination complexes and stimulates activities of RF-1 and RF-2. It binds guanine nucleotides and has strong preference for UGA stop codons. It may interact directly with the ribosome. The stimulation of RF-1 and RF-2 is significantly reduced by GTP and GDP, but not by GMP. This Yersinia pestis bv. Antiqua (strain Antiqua) protein is Peptide chain release factor 3.